Here is a 393-residue protein sequence, read N- to C-terminus: NAD(P)H-quinone oxidoreductase subunit H, chloroplastic (393 aa).

It belongs to the complex I 49 kDa subunit family. As to quaternary structure, NDH is composed of at least 16 different subunits, 5 of which are encoded in the nucleus.

Its subcellular location is the plastid. It is found in the chloroplast thylakoid membrane. It carries out the reaction a plastoquinone + NADH + (n+1) H(+)(in) = a plastoquinol + NAD(+) + n H(+)(out). It catalyses the reaction a plastoquinone + NADPH + (n+1) H(+)(in) = a plastoquinol + NADP(+) + n H(+)(out). Functionally, NDH shuttles electrons from NAD(P)H:plastoquinone, via FMN and iron-sulfur (Fe-S) centers, to quinones in the photosynthetic chain and possibly in a chloroplast respiratory chain. The immediate electron acceptor for the enzyme in this species is believed to be plastoquinone. Couples the redox reaction to proton translocation, and thus conserves the redox energy in a proton gradient. The chain is NAD(P)H-quinone oxidoreductase subunit H, chloroplastic from Crucihimalaya wallichii (Rock-cress).